Reading from the N-terminus, the 104-residue chain is Large ribosomal subunit protein bL21c (104 aa).

It belongs to the bacterial ribosomal protein bL21 family. In terms of assembly, part of the 50S ribosomal subunit.

Its subcellular location is the plastid. The protein localises to the cyanelle. Functionally, this protein binds to 23S rRNA. The chain is Large ribosomal subunit protein bL21c from Cyanophora paradoxa.